The primary structure comprises 164 residues: ATP synthase subunit b (164 aa).

Residues 6–26 form a helical membrane-spanning segment; it reads GELIGNFILITGSFILLLVLI.

This sequence belongs to the ATPase B chain family. F-type ATPases have 2 components, F(1) - the catalytic core - and F(0) - the membrane proton channel. F(1) has five subunits: alpha(3), beta(3), gamma(1), delta(1), epsilon(1). F(0) has three main subunits: a(1), b(2) and c(10-14). The alpha and beta chains form an alternating ring which encloses part of the gamma chain. F(1) is attached to F(0) by a central stalk formed by the gamma and epsilon chains, while a peripheral stalk is formed by the delta and b chains.

It is found in the cell membrane. Its function is as follows. F(1)F(0) ATP synthase produces ATP from ADP in the presence of a proton or sodium gradient. F-type ATPases consist of two structural domains, F(1) containing the extramembraneous catalytic core and F(0) containing the membrane proton channel, linked together by a central stalk and a peripheral stalk. During catalysis, ATP synthesis in the catalytic domain of F(1) is coupled via a rotary mechanism of the central stalk subunits to proton translocation. Component of the F(0) channel, it forms part of the peripheral stalk, linking F(1) to F(0). The polypeptide is ATP synthase subunit b (Streptococcus pneumoniae serotype 2 (strain D39 / NCTC 7466)).